The primary structure comprises 292 residues: Ephrin type-A receptor 4a (292 aa).

ATP-binding positions include 1–9 and Lys27; that span reads IGIGEFGEV. A Protein kinase domain is found at 1 to 265; that stretch reads IGIGEFGEVC…QIVNMLDKLI (265 aa). Asp120 functions as the Proton acceptor in the catalytic mechanism. A Phosphotyrosine; by autocatalysis modification is found at Tyr153.

This sequence belongs to the protein kinase superfamily. Tyr protein kinase family. Ephrin receptor subfamily. As to expression, widely expressed in the developing nervous system.

It localises to the cell membrane. It is found in the early endosome. The catalysed reaction is L-tyrosyl-[protein] + ATP = O-phospho-L-tyrosyl-[protein] + ADP + H(+). Receptor tyrosine kinase which binds membrane-bound ephrin family ligands residing on adjacent cells, leading to contact-dependent bidirectional signaling into neighboring cells. The signaling pathway downstream of the receptor is referred to as forward signaling while the signaling pathway downstream of the ephrin ligand is referred to as reverse signaling. Highly promiscuous, it has the unique property among Eph receptors to bind and to be physiologically activated by both GPI-anchored ephrin-A and transmembrane ephrin-B ligands including efna1 and efnb3. Upon activation by ephrin ligands, modulates cell morphology and integrin-dependent cell adhesion through regulation of the Rac, Rap and Rho GTPases activity. Plays an important role in the development of the nervous system controlling different steps of axonal guidance including the establishment of the corticospinal projections. The chain is Ephrin type-A receptor 4a (epha4a) from Danio rerio (Zebrafish).